A 92-amino-acid polypeptide reads, in one-letter code: Small ribosomal subunit protein uS19c (92 aa).

The protein belongs to the universal ribosomal protein uS19 family.

It localises to the plastid. Its subcellular location is the chloroplast. Protein S19 forms a complex with S13 that binds strongly to the 16S ribosomal RNA. In Pinus koraiensis (Korean pine), this protein is Small ribosomal subunit protein uS19c.